Here is a 96-residue protein sequence, read N- to C-terminus: Small ribosomal subunit protein bS6 (96 aa).

Belongs to the bacterial ribosomal protein bS6 family.

Its function is as follows. Binds together with bS18 to 16S ribosomal RNA. The polypeptide is Small ribosomal subunit protein bS6 (Streptomyces griseus subsp. griseus (strain JCM 4626 / CBS 651.72 / NBRC 13350 / KCC S-0626 / ISP 5235)).